The primary structure comprises 196 residues: Phosphoheptose isomerase (196 aa).

Residues 31-196 (VARQFKAGNK…KAGLEAQIAV (166 aa)) form the SIS domain. 46–48 (NGG) contributes to the substrate binding site. Positions 55 and 59 each coordinate Zn(2+). Residues E59, 88–89 (ND), 114–116 (STS), S119, and Q166 contribute to the substrate site. Zn(2+)-binding residues include Q166 and H174.

It belongs to the SIS family. GmhA subfamily. Zn(2+) serves as cofactor.

The protein resides in the cytoplasm. The enzyme catalyses 2 D-sedoheptulose 7-phosphate = D-glycero-alpha-D-manno-heptose 7-phosphate + D-glycero-beta-D-manno-heptose 7-phosphate. The protein operates within carbohydrate biosynthesis; D-glycero-D-manno-heptose 7-phosphate biosynthesis; D-glycero-alpha-D-manno-heptose 7-phosphate and D-glycero-beta-D-manno-heptose 7-phosphate from sedoheptulose 7-phosphate: step 1/1. Catalyzes the isomerization of sedoheptulose 7-phosphate in D-glycero-D-manno-heptose 7-phosphate. The chain is Phosphoheptose isomerase from Crocosphaera subtropica (strain ATCC 51142 / BH68) (Cyanothece sp. (strain ATCC 51142)).